Consider the following 275-residue polypeptide: NH(3)-dependent NAD(+) synthetase (275 aa).

46 to 53 (GISGGQDS) provides a ligand contact to ATP. A Mg(2+)-binding site is contributed by Asp-52. Arg-140 serves as a coordination point for deamido-NAD(+). Thr-160 provides a ligand contact to ATP. Glu-165 contributes to the Mg(2+) binding site. Deamido-NAD(+)-binding residues include Lys-173 and Asp-180. 2 residues coordinate ATP: Lys-189 and Thr-211. 260 to 261 (HK) serves as a coordination point for deamido-NAD(+).

The protein belongs to the NAD synthetase family. In terms of assembly, homodimer.

The catalysed reaction is deamido-NAD(+) + NH4(+) + ATP = AMP + diphosphate + NAD(+) + H(+). The protein operates within cofactor biosynthesis; NAD(+) biosynthesis; NAD(+) from deamido-NAD(+) (ammonia route): step 1/1. In terms of biological role, catalyzes the ATP-dependent amidation of deamido-NAD to form NAD. Uses ammonia as a nitrogen source. The sequence is that of NH(3)-dependent NAD(+) synthetase from Escherichia coli (strain K12 / MC4100 / BW2952).